The following is a 161-amino-acid chain: MEAKKDKAQQVADVSHLLSTSAGFVIFDYTSMSAIEATSIRKKLFKNGSKIKVIKNNILRRALKAGKFEGIDETAIKGKLAVAVGVNEIVETLKAVDGVVKAKEAMNFVCGYFDNRAFNSADLEKIAKLPGRNELYGMFLSVLQAPLRKFLYALEAVKAAK.

It belongs to the universal ribosomal protein uL10 family. As to quaternary structure, part of the ribosomal stalk of the 50S ribosomal subunit. The N-terminus interacts with L11 and the large rRNA to form the base of the stalk. The C-terminus forms an elongated spine to which L12 dimers bind in a sequential fashion forming a multimeric L10(L12)X complex.

In terms of biological role, forms part of the ribosomal stalk, playing a central role in the interaction of the ribosome with GTP-bound translation factors. In Mycoplasma pneumoniae (strain ATCC 29342 / M129 / Subtype 1) (Mycoplasmoides pneumoniae), this protein is Large ribosomal subunit protein uL10 (rplJ).